An 81-amino-acid polypeptide reads, in one-letter code: Photosystem I iron-sulfur center (81 aa).

4Fe-4S ferredoxin-type domains are found at residues 2 to 31 (AHIV…MVPW) and 39 to 68 (MASA…VRVY). Residues C11, C14, C17, C21, C48, C51, C54, and C58 each coordinate [4Fe-4S] cluster.

The eukaryotic PSI reaction center is composed of at least 11 subunits. [4Fe-4S] cluster serves as cofactor.

It is found in the plastid. Its subcellular location is the chloroplast thylakoid membrane. It catalyses the reaction reduced [plastocyanin] + hnu + oxidized [2Fe-2S]-[ferredoxin] = oxidized [plastocyanin] + reduced [2Fe-2S]-[ferredoxin]. In terms of biological role, apoprotein for the two 4Fe-4S centers FA and FB of photosystem I (PSI); essential for photochemical activity. FB is the terminal electron acceptor of PSI, donating electrons to ferredoxin. The C-terminus interacts with PsaA/B/D and helps assemble the protein into the PSI complex. Required for binding of PsaD and PsaE to PSI. PSI is a plastocyanin/cytochrome c6-ferredoxin oxidoreductase, converting photonic excitation into a charge separation, which transfers an electron from the donor P700 chlorophyll pair to the spectroscopically characterized acceptors A0, A1, FX, FA and FB in turn. The sequence is that of Photosystem I iron-sulfur center from Chlamydomonas reinhardtii (Chlamydomonas smithii).